The chain runs to 126 residues: Aspartate 1-decarboxylase (126 aa).

Residue Ser-25 is the Schiff-base intermediate with substrate; via pyruvic acid of the active site. Pyruvic acid (Ser) is present on Ser-25. Position 57 (Thr-57) interacts with substrate. The Proton donor role is filled by Tyr-58. A substrate-binding site is contributed by 73-75 (GAA).

The protein belongs to the PanD family. Heterooctamer of four alpha and four beta subunits. It depends on pyruvate as a cofactor. In terms of processing, is synthesized initially as an inactive proenzyme, which is activated by self-cleavage at a specific serine bond to produce a beta-subunit with a hydroxyl group at its C-terminus and an alpha-subunit with a pyruvoyl group at its N-terminus.

The protein resides in the cytoplasm. It catalyses the reaction L-aspartate + H(+) = beta-alanine + CO2. The protein operates within cofactor biosynthesis; (R)-pantothenate biosynthesis; beta-alanine from L-aspartate: step 1/1. Catalyzes the pyruvoyl-dependent decarboxylation of aspartate to produce beta-alanine. The sequence is that of Aspartate 1-decarboxylase from Psychrobacter sp. (strain PRwf-1).